The following is a 136-amino-acid chain: Small ribosomal subunit protein uS8 (136 aa).

The protein belongs to the universal ribosomal protein uS8 family. In terms of assembly, part of the 30S ribosomal subunit. Contacts proteins S5 and S12.

Its function is as follows. One of the primary rRNA binding proteins, it binds directly to 16S rRNA central domain where it helps coordinate assembly of the platform of the 30S subunit. The sequence is that of Small ribosomal subunit protein uS8 from Frankia alni (strain DSM 45986 / CECT 9034 / ACN14a).